Reading from the N-terminus, the 1030-residue chain is Pro-apoptotic serine protease NMA111 (1030 aa).

The interval 1 to 48 (MNGTTSPIAARSKRKEPPHTVDGRHPKHHRTNGEVAPAADNTPDNQDE) is disordered. The span at 15 to 24 (KEPPHTVDGR) shows a compositional bias: basic and acidic residues. The interval 89–279 (VVSIRFCQTC…LPLDRPLRAL (191 aa)) is serine protease. Active-site charge relay system residues include His127, Asp158, and Ser240. PDZ domains are found at residues 312–384 (PEWE…LRGG) and 880–960 (AVSF…LRAM).

The protein belongs to the peptidase S1C family.

The protein localises to the nucleus. Functionally, nuclear serine protease which mediates apoptosis. The chain is Pro-apoptotic serine protease NMA111 (NMA111) from Chaetomium globosum (strain ATCC 6205 / CBS 148.51 / DSM 1962 / NBRC 6347 / NRRL 1970) (Soil fungus).